The following is a 369-amino-acid chain: Probable serine/threonine-protein kinase FMP48 (369 aa).

The region spanning 2–369 (YTKLRSIQSG…EKPCLIQDGK (368 aa)) is the Protein kinase domain. ATP is bound by residues 8–16 (IQSGTFSTV) and Lys-31. Catalysis depends on Asp-133, which acts as the Proton acceptor.

The protein belongs to the protein kinase superfamily. Ser/Thr protein kinase family.

It localises to the mitochondrion. The enzyme catalyses L-seryl-[protein] + ATP = O-phospho-L-seryl-[protein] + ADP + H(+). It carries out the reaction L-threonyl-[protein] + ATP = O-phospho-L-threonyl-[protein] + ADP + H(+). This Saccharomyces cerevisiae (strain ATCC 204508 / S288c) (Baker's yeast) protein is Probable serine/threonine-protein kinase FMP48 (FMP48).